Consider the following 284-residue polypeptide: Bifunctional protein FolD (284 aa).

166–168 lines the NADP(+) pocket; sequence GAS.

It belongs to the tetrahydrofolate dehydrogenase/cyclohydrolase family. In terms of assembly, homodimer.

The catalysed reaction is (6R)-5,10-methylene-5,6,7,8-tetrahydrofolate + NADP(+) = (6R)-5,10-methenyltetrahydrofolate + NADPH. The enzyme catalyses (6R)-5,10-methenyltetrahydrofolate + H2O = (6R)-10-formyltetrahydrofolate + H(+). Its pathway is one-carbon metabolism; tetrahydrofolate interconversion. Functionally, catalyzes the oxidation of 5,10-methylenetetrahydrofolate to 5,10-methenyltetrahydrofolate and then the hydrolysis of 5,10-methenyltetrahydrofolate to 10-formyltetrahydrofolate. This is Bifunctional protein FolD from Legionella pneumophila subsp. pneumophila (strain Philadelphia 1 / ATCC 33152 / DSM 7513).